We begin with the raw amino-acid sequence, 272 residues long: Isoprenyl transferase (272 aa).

Aspartate 32 is a catalytic residue. Aspartate 32 is a Mg(2+) binding site. Substrate-binding positions include 33–36, tryptophan 37, arginine 45, histidine 49, and 77–79; these read GNGR and STE. Asparagine 80 (proton acceptor) is an active-site residue. Residues tryptophan 81, arginine 83, arginine 200, and 206 to 208 each bind substrate; that span reads RIS. A Mg(2+)-binding site is contributed by glutamate 219.

Belongs to the UPP synthase family. As to quaternary structure, homodimer. Requires Mg(2+) as cofactor.

In terms of biological role, catalyzes the condensation of isopentenyl diphosphate (IPP) with allylic pyrophosphates generating different type of terpenoids. The chain is Isoprenyl transferase from Prochlorococcus marinus subsp. pastoris (strain CCMP1986 / NIES-2087 / MED4).